Consider the following 291-residue polypeptide: Kidney mitochondrial carrier protein 1 (291 aa).

Solcar repeat units follow at residues 7 to 96 (KPFI…LKRL), 104 to 189 (ETLV…TKKH), and 198 to 289 (DTVY…LKKL). The next 6 membrane-spanning stretches (helical) occupy residues 9–26 (FIYG…TFPI), 71–89 (GIAP…KIGT), 106–124 (LVLN…SCIA), 164–183 (GVSL…LPVY), 204–224 (FLSS…VDVV), and 264–283 (GFWP…FITY).

It belongs to the mitochondrial carrier (TC 2.A.29) family.

It is found in the mitochondrion inner membrane. The catalysed reaction is sulfite(in) + sulfate(out) = sulfite(out) + sulfate(in). It catalyses the reaction thiosulfate(in) + sulfate(out) = thiosulfate(out) + sulfate(in). It carries out the reaction sulfate(out) + phosphate(in) = sulfate(in) + phosphate(out). The enzyme catalyses oxalate(in) + sulfate(out) = oxalate(out) + sulfate(in). The catalysed reaction is malonate(in) + sulfate(out) = malonate(out) + sulfate(in). It catalyses the reaction maleate(in) + sulfate(out) = maleate(out) + sulfate(in). It carries out the reaction (S)-malate(in) + sulfate(out) = (S)-malate(out) + sulfate(in). The enzyme catalyses (3S)-citramalate(in) + sulfate(out) = (3S)-citramalate(out) + sulfate(in). The catalysed reaction is (3R)-citramalate(in) + sulfate(out) = (3R)-citramalate(out) + sulfate(in). It catalyses the reaction sulfate(out) + succinate(in) = sulfate(in) + succinate(out). It carries out the reaction (S,S)-tartrate(in) + sulfate(out) = (S,S)-tartrate(out) + sulfate(in). The enzyme catalyses (2R,3R)-tartrate(in) + sulfate(out) = (2R,3R)-tartrate(out) + sulfate(in). The catalysed reaction is D-aspartate(in) + sulfate(out) = D-aspartate(out) + sulfate(in). It catalyses the reaction L-aspartate(in) + sulfate(out) = L-aspartate(out) + sulfate(in). It carries out the reaction sulfate(in) = sulfate(out). The enzyme catalyses phosphate(in) = phosphate(out). The catalysed reaction is (S)-malate(out) = (S)-malate(in). In terms of biological role, probable transporter. Antiporter that transports inorganic anions (sulfate, sulfite, thiosulfate and phosphate) and, to a lesser extent, a variety of dicarboxylates (e.g. malonate, malate and citramalate) and, even more so, aspartate. The sulfate/sulfate exchange is much higher than the phosphate/phosphate and malate/malate exchanges. The transport affinities is higher for sulfate and thiosulfate than for any other substrate. May catalyze the export of sulfite and thiosulfate (the hydrogen sulfide degradation products) from the mitochondria, thereby modulating the level of the hydrogen sulfide. Also may mediate a very low unidirectional transport of sulfate, phosphate and (S)-malate. The sequence is that of Kidney mitochondrial carrier protein 1 from Xenopus laevis (African clawed frog).